Reading from the N-terminus, the 135-residue chain is Holo-[acyl-carrier-protein] synthase (135 aa).

Positions 8 and 58 each coordinate Mg(2+).

It belongs to the P-Pant transferase superfamily. AcpS family. Mg(2+) is required as a cofactor.

The protein resides in the cytoplasm. It carries out the reaction apo-[ACP] + CoA = holo-[ACP] + adenosine 3',5'-bisphosphate + H(+). Functionally, transfers the 4'-phosphopantetheine moiety from coenzyme A to a Ser of acyl-carrier-protein. The sequence is that of Holo-[acyl-carrier-protein] synthase from Leuconostoc citreum (strain KM20).